The sequence spans 137 residues: Fatty acid-binding protein homolog 8 (137 aa).

The Nuclear localization signal motif lies at 24–34 (KEIGVGLLIRK).

This sequence belongs to the calycin superfamily. Fatty-acid binding protein (FABP) family. Monomer. As to expression, intestine.

It localises to the lysosome. It is found in the nucleus. In terms of biological role, lysosomal lipid chaperone which binds to a wide range of unsaturated fatty acids, including high affinity binding to oleic acid and oleoylethanolamide, to transport them into the nucleus. As part of a lysosome-to-nucleus retrograde lipid signaling pathway, translocates into the nucleus where it activates the transcription of genes promoting longevity and activation of mitochondrial beta oxidation. This is Fatty acid-binding protein homolog 8 from Caenorhabditis elegans.